The sequence spans 287 residues: 4-hydroxybenzoate octaprenyltransferase (287 aa).

5 consecutive transmembrane segments (helical) span residues 35 to 55 (FAAG…GVVV), 96 to 116 (LFGV…PLVV), 211 to 231 (IIAA…MLAG), 235 to 255 (IYGL…KLIY), and 262 to 282 (CFTA…ALTL).

The protein belongs to the UbiA prenyltransferase family. Mg(2+) serves as cofactor.

Its subcellular location is the cell inner membrane. It carries out the reaction all-trans-octaprenyl diphosphate + 4-hydroxybenzoate = 4-hydroxy-3-(all-trans-octaprenyl)benzoate + diphosphate. It functions in the pathway cofactor biosynthesis; ubiquinone biosynthesis. Its function is as follows. Catalyzes the prenylation of para-hydroxybenzoate (PHB) with an all-trans polyprenyl group. Mediates the second step in the final reaction sequence of ubiquinone-8 (UQ-8) biosynthesis, which is the condensation of the polyisoprenoid side chain with PHB, generating the first membrane-bound Q intermediate 3-octaprenyl-4-hydroxybenzoate. The chain is 4-hydroxybenzoate octaprenyltransferase from Shewanella halifaxensis (strain HAW-EB4).